The following is a 307-amino-acid chain: 2-phospho-L-lactate transferase (307 aa).

7,8-didemethyl-8-hydroxy-5-deazariboflavin-binding residues include Asp-48 and Lys-87.

It belongs to the CofD family. Homodimer. Mg(2+) is required as a cofactor.

The enzyme catalyses (2S)-lactyl-2-diphospho-5'-guanosine + 7,8-didemethyl-8-hydroxy-5-deazariboflavin = oxidized coenzyme F420-0 + GMP + H(+). It functions in the pathway cofactor biosynthesis; coenzyme F420 biosynthesis. In terms of biological role, catalyzes the transfer of the 2-phospholactate moiety from (2S)-lactyl-2-diphospho-5'-guanosine to 7,8-didemethyl-8-hydroxy-5-deazariboflavin (FO) with the formation of oxidized coenzyme F420-0 and GMP. In Methanosarcina acetivorans (strain ATCC 35395 / DSM 2834 / JCM 12185 / C2A), this protein is 2-phospho-L-lactate transferase.